A 91-amino-acid polypeptide reads, in one-letter code: Small ribosomal subunit protein uS19 (91 aa).

Belongs to the universal ribosomal protein uS19 family.

In terms of biological role, protein S19 forms a complex with S13 that binds strongly to the 16S ribosomal RNA. The sequence is that of Small ribosomal subunit protein uS19 from Pseudoalteromonas atlantica (strain T6c / ATCC BAA-1087).